A 389-amino-acid chain; its full sequence is Protein P4 (389 aa).

The polypeptide is Protein P4 (Rice tungro bacilliform virus (isolate Philippines) (RTBV)).